Here is a 235-residue protein sequence, read N- to C-terminus: Ribosome maturation factor RimM (235 aa).

The span at 1 to 19 (MKHEEANKEIGGRGAEGQR) shows a compositional bias: basic and acidic residues. The segment at 1–49 (MKHEEANKEIGGRGAEGQRSKRVGGNSKIQNIQSPAPNPQPIVPNTQSP) is disordered. A PRC barrel domain is found at 150–230 (EDEYHVLDLI…RIEITPPPGL (81 aa)).

This sequence belongs to the RimM family. Binds ribosomal protein uS19.

It localises to the cytoplasm. In terms of biological role, an accessory protein needed during the final step in the assembly of 30S ribosomal subunit, possibly for assembly of the head region. Essential for efficient processing of 16S rRNA. May be needed both before and after RbfA during the maturation of 16S rRNA. It has affinity for free ribosomal 30S subunits but not for 70S ribosomes. This chain is Ribosome maturation factor RimM, found in Nostoc punctiforme (strain ATCC 29133 / PCC 73102).